We begin with the raw amino-acid sequence, 568 residues long: Circadian clock protein KaiC2 (568 aa).

2 KaiC domains span residues 11 to 250 and 251 to 485; these read IKCP…SVSQ and ERIS…LTGT. 2 positions are modified to phosphoserine; by autocatalysis: Ser-423 and Ser-424.

This sequence belongs to the KaiC family. In terms of assembly, multimerizes, probably forming homohexamers, no interaction with KaiC1 or KaiC3 is seen.

It carries out the reaction L-seryl-[protein] + ATP = O-phospho-L-seryl-[protein] + ADP + H(+). The catalysed reaction is L-threonyl-[protein] + ATP = O-phospho-L-threonyl-[protein] + ADP + H(+). The enzyme catalyses ATP + H2O = ADP + phosphate + H(+). In terms of biological role, autophosphorylates independently of KaiA. This chain is Circadian clock protein KaiC2, found in Synechocystis sp. (strain ATCC 27184 / PCC 6803 / Kazusa).